Reading from the N-terminus, the 838-residue chain is MSEYLAQTPCKFTIWSSEIDLIRTNLLVNAHPLSTVGRLLQYIHYQIYKQLRAIYQPEEQCTNSEIPHTPLNSINTYFLSYEGRELSATCLLKDITSSSHPDSNHFIRLQLEKRTSPSGSAFDLEYDMEGEFNSMNIQFEINTLSSQRIFNSMEPNLPIGTTLARLEKLALERIKDFEKSAGNLCGIKEDHSVSDLQGFIIKGKQTPMFLNYGSDSDYYKDLNLVDLIGIDFAPAHNSFFTFLFKMNHEQNSHIANDEERFVLEFISDATLSITQMNVKPDTTVKQVKDFICSVYTHSLNLRRNDIKLIYKGQLLHENNFAGNSSKISEYIKEPHEVKVHVQINQEYTESGPGFWNEVFNNPNIFQFMPPDTRSQSPVSFAPTQGRSPAAIRGEERGIPYVTESGNDIVPTDELYRKCIINGDEVVFIPVSELNPQSSYLSVIKGDYGEIKIPISSNDYRINGDNILLSPSAIEQLESALNFKIERPRDSTLLHPSGEHVRAADNTSSANDNNTVENDESAWNRRVVRPLRNSFPLLLVLIRTFYLIGYNSLVPFFIILEFGSFLPWKYIILLSLLFIFRTVWNTQEVWNLWRDYLHLNEIDEVKFSQIKEFINSNSLTLNFYKKCKDTQSAIDLLMIPNLHEQRLSVYSKYDIEYDTNTPDVGQLNLLFIKVLSGEIPKDALDELFKEFFELYETTRNMNTLYPQDSLNELLLMIWKESQKKDINTLPKYRRWFQTLCSQIAEHNVLDVVLRYIIPDPVNDRVITAVIKNFVLFWVTLLPYVKEKLDDIVAQRARDREQPAPSAQQQENEDEALIIPDEEEPTATGAQPHLYIPDED.

Over 1–536 (MSEYLAQTPC…VRPLRNSFPL (536 aa)) the chain is Cytoplasmic. The interval 31-240 (HPLSTVGRLL…DFAPAHNSFF (210 aa)) is required for ERAD-L function. Residues 259–318 (ERFVLEFISDATLSITQMNVKPDTTVKQVKDFICSVYTHSLNLRRNDIKLIYKGQLLHEN) enclose the Ubiquitin-like domain. Residues 319 to 418 (NFAGNSSKIS…VPTDELYRKC (100 aa)) form an important for HRD1 oligomer formation region. Residues 345–535 (QEYTESGPGF…VVRPLRNSFP (191 aa)) are interaction with HRD1. Phosphoserine occurs at positions 374, 376, and 379. The required for ERAD-L function and HRD1 oligomer formation stretch occupies residues 437–490 (SSYLSVIKGDYGEIKIPISSNDYRINGDNILLSPSAIEQLESALNFKIERPRDS). Residues 537-559 (LLVLIRTFYLIGYNSLVPFFIIL) form a helical membrane-spanning segment. At 560 to 563 (EFGS) the chain is on the extracellular side. Residues 564 to 583 (FLPWKYIILLSLLFIFRTVW) traverse the membrane as a helical segment. At 584 to 838 (NTQEVWNLWR…QPHLYIPDED (255 aa)) the chain is on the cytoplasmic side. The segment at 584–838 (NTQEVWNLWR…QPHLYIPDED (255 aa)) is interaction with DER1. The disordered stretch occupies residues 795–838 (ARDREQPAPSAQQQENEDEALIIPDEEEPTATGAQPHLYIPDED). A compositionally biased stretch (acidic residues) spans 809 to 823 (ENEDEALIIPDEEEP).

In terms of assembly, component of the HRD1 ubiquitin ligase complex which contains the E3 ligase HRD1, its cofactors HRD3, USA1 and DER1, substrate recruiting factor YOS9 and CDC48-binding protein UBX2. Within the complex, interacts directly with HRD1 (via N-terminus) and DER1 (via C-terminus) and indirectly with HRD3. In ERAD-L, HRD3 and YOS9 jointly bind misfolded glycoproteins in the endoplasmic reticulum (ER) lumen. Movement of ERAD-L substrates through the ER membrane is facilitated by HRD1 and DER1 which have lateral gates facing each other and which distort the membrane region between the lateral gates, making it much thinner than a normal phospholipid bilayer. Substrates insert into the membrane as a hairpin loop with one strand interacting with DER1 and the other with HRD1. The HRD1 complex interacts with the heterotrimeric CDC48-NPL4-UFD1 ATPase complex which is recruited by UBX2 via its interaction with CDC48 and which moves ubiquitinated substrates to the cytosol for targeting to the proteasome.

It localises to the endoplasmic reticulum membrane. Scaffold protein of the endoplasmic reticulum-associated degradation (ERAD) (also known as endoplasmic reticulum quality control, ERQC) pathway involved in ubiquitin-dependent degradation of misfolded endoplasmic reticulum proteins. Component of the HRD1 ubiquitin ligase complex, which is part of the ERAD-L and ERAD-M pathways responsible for the rapid degradation of soluble lumenal and membrane proteins with misfolded lumenal domains (ERAD-L), or ER-membrane proteins with misfolded transmembrane domains (ERAD-M). Has multiple functions in ERAD including recruitment of DER1 to the HRD1 ubiquitin ligase, and regulation of HRD1 activity. Involved in oligomerization of HRD1 and in HRD1 autoubiquitination and degradation. In Saccharomyces cerevisiae (strain ATCC 204508 / S288c) (Baker's yeast), this protein is U1 SNP1-associating protein 1 (USA1).